We begin with the raw amino-acid sequence, 269 residues long: Triosephosphate isomerase (269 aa).

A substrate-binding site is contributed by 8–10; the sequence is NWK. Catalysis depends on histidine 105, which acts as the Electrophile. The Proton acceptor role is filled by glutamate 183. Substrate-binding positions include glycine 189, serine 227, and 248–249; that span reads GG.

Belongs to the triosephosphate isomerase family. In terms of assembly, homodimer.

It localises to the cytoplasm. The enzyme catalyses D-glyceraldehyde 3-phosphate = dihydroxyacetone phosphate. It functions in the pathway carbohydrate biosynthesis; gluconeogenesis. The protein operates within carbohydrate degradation; glycolysis; D-glyceraldehyde 3-phosphate from glycerone phosphate: step 1/1. Functionally, involved in the gluconeogenesis. Catalyzes stereospecifically the conversion of dihydroxyacetone phosphate (DHAP) to D-glyceraldehyde-3-phosphate (G3P). In Psychrobacter cryohalolentis (strain ATCC BAA-1226 / DSM 17306 / VKM B-2378 / K5), this protein is Triosephosphate isomerase.